Reading from the N-terminus, the 379-residue chain is Oxidized polyvinyl alcohol hydrolase (379 aa).

An N-terminal signal peptide occupies residues 1-23; sequence MNQSLGVLRLTRGVIALALASVA. Active-site charge relay system residues include Ser203 and Ser309.

This sequence belongs to the peptidase S9A family. Monomer.

It carries out the reaction nonane-4,6-dione + H2O = pentan-2-one + butanoate + H(+). Its function is as follows. Catalyzes the hydrolysis of 4,6-nonanedione, a beta-diketone compound. Also mediates hydrolysis of oxidized polyvinyl alcohol (PVA) in the second step in the degradation of polyvinyl alcohol. Not active toward the monoketone structure. This Pseudomonas sp protein is Oxidized polyvinyl alcohol hydrolase (pvaB).